A 221-amino-acid polypeptide reads, in one-letter code: Glutathione S-transferase alpha-5 (221 aa).

The GST N-terminal domain maps to 3 to 83 (GKPVLHYFDG…YIATKYNLYG (81 aa)). At lysine 4 the chain carries N6-succinyllysine. Glutathione is bound by residues tyrosine 9, arginine 45, 54 to 55 (QV), and 67 to 68 (QT). The GST C-terminal domain occupies 85 to 207 (DMKERALIDM…LQPGSQRKPF (123 aa)).

The protein belongs to the GST superfamily. Alpha family. As to quaternary structure, heterodimer of YC1 and YC2. As to expression, liver, nasal mucosa and epididymis.

It localises to the cytoplasm. The catalysed reaction is RX + glutathione = an S-substituted glutathione + a halide anion + H(+). Conjugation of reduced glutathione to a wide number of exogenous and endogenous hydrophobic electrophiles. Has substantial activity toward aflatoxin B1-8,9-epoxide. In Rattus norvegicus (Rat), this protein is Glutathione S-transferase alpha-5 (Gsta5).